Here is a 311-residue protein sequence, read N- to C-terminus: N-acetylmuramic acid 6-phosphate etherase (311 aa).

The 165-residue stretch at V66–K230 folds into the SIS domain. The Proton donor role is filled by E94. E125 is an active-site residue.

It belongs to the GCKR-like family. MurNAc-6-P etherase subfamily. In terms of assembly, homodimer.

It carries out the reaction N-acetyl-D-muramate 6-phosphate + H2O = N-acetyl-D-glucosamine 6-phosphate + (R)-lactate. It functions in the pathway amino-sugar metabolism; N-acetylmuramate degradation. Functionally, specifically catalyzes the cleavage of the D-lactyl ether substituent of MurNAc 6-phosphate, producing GlcNAc 6-phosphate and D-lactate. In Salinibacter ruber (strain DSM 13855 / M31), this protein is N-acetylmuramic acid 6-phosphate etherase.